We begin with the raw amino-acid sequence, 174 residues long: Transcriptional repressor NrdR (174 aa).

Residues 3–34 fold into a zinc finger; that stretch reads CPICHFPETDVIDTRKLYEGEVIRRRRKCRAC. The ATP-cone domain maps to 49 to 139; the sequence is LMVVKKDGTR…VYRSFADIGK (91 aa). A disordered region spans residues 151-174; the sequence is EGTRNGHSSAATTDQGTTDNHSRM. A compositionally biased stretch (polar residues) spans 155-174; that stretch reads NGHSSAATTDQGTTDNHSRM.

The protein belongs to the NrdR family. Requires Zn(2+) as cofactor.

Functionally, negatively regulates transcription of bacterial ribonucleotide reductase nrd genes and operons by binding to NrdR-boxes. The chain is Transcriptional repressor NrdR from Chloroflexus aggregans (strain MD-66 / DSM 9485).